A 148-amino-acid chain; its full sequence is MGRLVFVSFGLLVVFLSLTGTGAGFCCPLGWSSYEGHCYKVFKQDMTWEDAEKFCTQQHEGSHLVSLQSSEEVDFVISMTAPMLKLGLVWIGLSNIWNECTLEWTNGNKVDYKAWSAEPECIVSKSTDKHWFSRPCSKTHKVVCKFQA.

The N-terminal stretch at 1-23 (MGRLVFVSFGLLVVFLSLTGTGA) is a signal peptide. 3 cysteine pairs are disulfide-bonded: C27-C38, C55-C144, and C121-C136. In terms of domain architecture, C-type lectin spans 34 to 145 (YEGHCYKVFK…CSKTHKVVCK (112 aa)).

The protein belongs to the snaclec family. As to quaternary structure, heterodimer; disulfide-linked. As to expression, expressed by the venom gland.

The protein localises to the secreted. Interferes with one step of hemostasis (modulation of platelet aggregation, or coagulation cascade, for example). The chain is Snaclec crotocetin from Crotalus durissus terrificus (South American rattlesnake).